Here is a 148-residue protein sequence, read N- to C-terminus: Antigen GM6 (148 aa).

The segment at 1–22 (KLKASDSRSFLDPMPEGVPLSE) is disordered. 2 tandem repeats follow at residues 1-68 (KLKA…HELA) and 69-136 (KLKA…HELA). One copy of the 3; truncated repeat lies at 137–148 (KLKASDSRSFQS).

It localises to the cytoplasm. The protein localises to the cytoskeleton. This is Antigen GM6 (GM6) from Trypanosoma brucei gambiense.